Consider the following 292-residue polypeptide: Protein LRATD1 (292 aa).

A Phosphoserine modification is found at S38. Positions 133–228 (PAPEPPAPAP…CRFGKREFKA (96 aa)) constitute an LRAT domain.

The protein belongs to the LRATD family. Only detected in testis. Highly expressed in colon cancer cells.

The protein localises to the cytoplasm. Functionally, may play a role in cell morphology and motility. This chain is Protein LRATD1, found in Homo sapiens (Human).